The following is a 462-amino-acid chain: ATP synthase subunit beta (462 aa).

151–158 (GGAGVGKT) contacts ATP.

The protein belongs to the ATPase alpha/beta chains family. In terms of assembly, F-type ATPases have 2 components, CF(1) - the catalytic core - and CF(0) - the membrane proton channel. CF(1) has five subunits: alpha(3), beta(3), gamma(1), delta(1), epsilon(1). CF(0) has three main subunits: a(1), b(2) and c(9-12). The alpha and beta chains form an alternating ring which encloses part of the gamma chain. CF(1) is attached to CF(0) by a central stalk formed by the gamma and epsilon chains, while a peripheral stalk is formed by the delta and b chains.

The protein localises to the cell inner membrane. The enzyme catalyses ATP + H2O + 4 H(+)(in) = ADP + phosphate + 5 H(+)(out). Produces ATP from ADP in the presence of a proton gradient across the membrane. The catalytic sites are hosted primarily by the beta subunits. This chain is ATP synthase subunit beta, found in Chlorobium limicola.